Reading from the N-terminus, the 550-residue chain is Methionine--tRNA ligase (550 aa).

A 'HIGH' region motif is present at residues 14 to 24 (PYANGSLHIGH). 4 residues coordinate Zn(2+): Cys-145, Cys-148, Cys-158, and Cys-161. The 'KMSKS' region motif lies at 331–335 (KMSKS). An ATP-binding site is contributed by Lys-334.

The protein belongs to the class-I aminoacyl-tRNA synthetase family. MetG type 1 subfamily. In terms of assembly, monomer. Zn(2+) is required as a cofactor.

Its subcellular location is the cytoplasm. It carries out the reaction tRNA(Met) + L-methionine + ATP = L-methionyl-tRNA(Met) + AMP + diphosphate. Is required not only for elongation of protein synthesis but also for the initiation of all mRNA translation through initiator tRNA(fMet) aminoacylation. The chain is Methionine--tRNA ligase from Wigglesworthia glossinidia brevipalpis.